The following is a 318-amino-acid chain: Ribosomal RNA small subunit methyltransferase H (318 aa).

S-adenosyl-L-methionine is bound by residues 34–36 (GGH), D57, L91, D110, and Q117.

Belongs to the methyltransferase superfamily. RsmH family.

It is found in the cytoplasm. It carries out the reaction cytidine(1402) in 16S rRNA + S-adenosyl-L-methionine = N(4)-methylcytidine(1402) in 16S rRNA + S-adenosyl-L-homocysteine + H(+). Its function is as follows. Specifically methylates the N4 position of cytidine in position 1402 (C1402) of 16S rRNA. In Chlorobaculum parvum (strain DSM 263 / NCIMB 8327) (Chlorobium vibrioforme subsp. thiosulfatophilum), this protein is Ribosomal RNA small subunit methyltransferase H.